The primary structure comprises 602 residues: ATP-dependent lipid A-core flippase 1 (602 aa).

5 consecutive transmembrane segments (helical) span residues 36-56, 80-100, 154-174, 176-196, and 261-281; these read LGFV…VYFL, LFII…NYCL, ILTI…MFYY, WQLS…VSVV, and ASVP…FYAI. The ABC transmembrane type-1 domain occupies 39 to 321; it reads VAAIIGMLGY…LTNVNSEFQQ (283 aa). An ABC transporter domain is found at 362-599; it reads YKNTNTMTTS…QGAYAQLHSF (238 aa). ATP is bound at residue 398–405; the sequence is GRSGSGKS.

This sequence belongs to the ABC transporter superfamily. Lipid exporter (TC 3.A.1.106) family. As to quaternary structure, homodimer.

Its subcellular location is the cell inner membrane. It catalyses the reaction ATP + H2O + lipid A-core oligosaccharideSide 1 = ADP + phosphate + lipid A-core oligosaccharideSide 2.. Involved in lipopolysaccharide (LPS) biosynthesis. Translocates lipid A-core from the inner to the outer leaflet of the inner membrane. Transmembrane domains (TMD) form a pore in the inner membrane and the ATP-binding domain (NBD) is responsible for energy generation. This is ATP-dependent lipid A-core flippase 1 from Colwellia psychrerythraea (strain 34H / ATCC BAA-681) (Vibrio psychroerythus).